We begin with the raw amino-acid sequence, 214 residues long: Probable transaldolase (214 aa).

Lys83 acts as the Schiff-base intermediate with substrate in catalysis.

This sequence belongs to the transaldolase family. Type 3B subfamily.

The protein localises to the cytoplasm. The enzyme catalyses D-sedoheptulose 7-phosphate + D-glyceraldehyde 3-phosphate = D-erythrose 4-phosphate + beta-D-fructose 6-phosphate. Its pathway is carbohydrate degradation; pentose phosphate pathway; D-glyceraldehyde 3-phosphate and beta-D-fructose 6-phosphate from D-ribose 5-phosphate and D-xylulose 5-phosphate (non-oxidative stage): step 2/3. In terms of biological role, transaldolase is important for the balance of metabolites in the pentose-phosphate pathway. The sequence is that of Probable transaldolase from Geobacter metallireducens (strain ATCC 53774 / DSM 7210 / GS-15).